A 197-amino-acid polypeptide reads, in one-letter code: Thymidine kinase (197 aa).

ATP contacts are provided by residues 9 to 16 (SAMDAGKT) and 87 to 90 (DEIH). Catalysis depends on Glu-88, which acts as the Proton acceptor. Zn(2+) is bound by residues Cys-145, Cys-147, Cys-187, and His-190.

The protein belongs to the thymidine kinase family. As to quaternary structure, homotetramer.

The protein resides in the cytoplasm. The catalysed reaction is thymidine + ATP = dTMP + ADP + H(+). The chain is Thymidine kinase from Francisella tularensis subsp. holarctica (strain LVS).